We begin with the raw amino-acid sequence, 395 residues long: Fractalkine (395 aa).

An N-terminal signal peptide occupies residues 1–24 (MAPSPLAWLLRLAAFFHLCTLLPG). The tract at residues 25-100 (QHLGMTKCEI…HQAAALTKNG (76 aa)) is chemokine and involved in interaction with ITGAV:ITGB3 and ITGA4:ITGB1. Residues 25 to 336 (QHLGMTKCEI…TPVPDTQAAT (312 aa)) are Extracellular-facing. 2 disulfide bridges follow: cysteine 32–cysteine 58 and cysteine 36–cysteine 74. The segment at 101–336 (GKFEKRVDNV…TPVPDTQAAT (236 aa)) is mucin-like stalk. Composition is skewed to polar residues over residues 148 to 172 (ARGT…TSEA) and 201 to 210 (AVYQSGSSSW). Disordered stretches follow at residues 148-180 (ARGT…LTAK) and 201-305 (AVYQ…SGSQ). Low complexity predominate over residues 218-236 (SPSTTAPSPQVSTTSPSTP). Residues 337-357 (RRQAVGLLAFLGLLFCLGVAM) traverse the membrane as a helical segment. The Cytoplasmic segment spans residues 358-395 (FAYQSLQGCPRKMAGEMVEGLRYVPRSCGSNSYVLVPV).

Belongs to the intercrine delta family. As to quaternary structure, monomer. Forms a ternary complex with CX3CR1 and ITGAV:ITGB3 or ITGA4:ITGB1. Post-translationally, a soluble short 80 kDa form may be released by proteolytic cleavage from the long membrane-anchored form. In terms of tissue distribution, highest levels in brain. Lower levels in kidney, heart and lung. Also found in skeletal muscle and testis. Highly expressed in lesional smooth muscle cells, but not macrophages. Low levels of ABCD-3 mRNA were also found in anti-CD40-stimulated splenic B-cells, but not in resting B-cells. Also expressed in dendritic cells.

The protein localises to the cell membrane. It localises to the secreted. In terms of biological role, chemokine that acts as a ligand for both CX3CR1 and integrins ITGAV:ITGB3 and ITGA4:ITGB1. The CX3CR1-CX3CL1 signaling exerts distinct functions in different tissue compartments, such as immune response, inflammation, cell adhesion and chemotaxis. Regulates leukocyte adhesion and migration processes at the endothelium. Can activate integrins in both a CX3CR1-dependent and CX3CR1-independent manner. In the presence of CX3CR1, activates integrins by binding to the classical ligand-binding site (site 1) in integrins. In the absence of CX3CR1, binds to a second site (site 2) in integrins which is distinct from site 1 and enhances the binding of other integrin ligands to site 1. The soluble form is chemotactic for T-cells and monocytes, but not for neutrophils. Its function is as follows. The membrane-bound form promotes adhesion of those leukocytes to endothelial cells. The protein is Fractalkine of Mus musculus (Mouse).